The primary structure comprises 36 residues: Endoglucanase Cel12A (36 aa).

Belongs to the glycosyl hydrolase 12 (cellulase H) family.

The protein resides in the secreted. It is found in the extracellular space. The enzyme catalyses Endohydrolysis of (1-&gt;4)-beta-D-glucosidic linkages in cellulose, lichenin and cereal beta-D-glucans.. Has carboxymethylcellulase activity. This is Endoglucanase Cel12A from Gloeophyllum trabeum (Brown rot fungus).